The sequence spans 127 residues: Holo-[acyl-carrier-protein] synthase (127 aa).

Asp-7 and Glu-56 together coordinate Mg(2+).

Belongs to the P-Pant transferase superfamily. AcpS family. Mg(2+) is required as a cofactor.

Its subcellular location is the cytoplasm. It carries out the reaction apo-[ACP] + CoA = holo-[ACP] + adenosine 3',5'-bisphosphate + H(+). Functionally, transfers the 4'-phosphopantetheine moiety from coenzyme A to a Ser of acyl-carrier-protein. The chain is Holo-[acyl-carrier-protein] synthase from Onion yellows phytoplasma (strain OY-M).